A 213-amino-acid chain; its full sequence is Uridine kinase (213 aa).

15–22 (GASASGKS) lines the ATP pocket.

The protein belongs to the uridine kinase family.

It is found in the cytoplasm. It catalyses the reaction uridine + ATP = UMP + ADP + H(+). It carries out the reaction cytidine + ATP = CMP + ADP + H(+). The protein operates within pyrimidine metabolism; CTP biosynthesis via salvage pathway; CTP from cytidine: step 1/3. It functions in the pathway pyrimidine metabolism; UMP biosynthesis via salvage pathway; UMP from uridine: step 1/1. The polypeptide is Uridine kinase (Yersinia pseudotuberculosis serotype O:1b (strain IP 31758)).